The chain runs to 667 residues: Protein angel homolog 1 (667 aa).

Phosphoserine occurs at positions 77 and 105.

The protein belongs to the CCR4/nocturin family.

This is Protein angel homolog 1 from Mus musculus (Mouse).